Consider the following 381-residue polypeptide: MPFSNSHNTLKLRFPAEDEFPDLSAHNNHMAKVLTPELYAELRAKSTPSGFTLDDVIQTGVDNPGHPYIMTVGCVAGDEESYDVFKELFDPIIEDRHGGYKPSDEHKTDLNPDNLQGGDDLDPNYVLSSRVRTGRSIRGFCLPPHCSRGERRAIEKLAVEALSSLDGDLAGRYYALKSMTEAEQQQLIDDHFLFDKPVSPLLLASGMARDWPDARGIWHNDNKTFLVWINEEDHLRVISMQKGGNMKEVFTRFCNGLTQIETLFKSKNYEFMWNPHLGYILTCPSNLGTGLRAGVHIKLPHLGKHEKFPEVLKRLRLQKRGTGGVDTAAVGGVFDVSNADRLGFSEVELVQMVVDGVKLLIEMEQRLEQGQAIDDLVPAQK.

A Phosphoserine modification is found at Ser-4. The Phosphagen kinase N-terminal domain maps to Lys-11 to Gly-98. The residue at position 35 (Thr-35) is a Phosphothreonine. Lys-45 is covalently cross-linked (Glycyl lysine isopeptide (Lys-Gly) (interchain with G-Cter in ubiquitin)). Position 72 (Val-72) interacts with creatine. Positions Arg-96–Leu-110 are enriched in basic and acidic residues. The interval Arg-96–Pro-123 is disordered. Residues Lys-101 and Lys-107 each participate in a glycyl lysine isopeptide (Lys-Gly) (interchain with G-Cter in ubiquitin) cross-link. Phosphotyrosine is present on Tyr-125. Residues Tyr-125–Leu-367 form the Phosphagen kinase C-terminal domain. ATP contacts are provided by residues Ser-128–Arg-132, Arg-130, Arg-132, and His-191. Positions Arg-130–Arg-138 are internal MTS-like signal. Residue Ser-199 is modified to Phosphoserine. Residue Glu-232 coordinates creatine. Arg-236 contributes to the ATP binding site. Tyr-269 bears the 3'-nitrotyrosine mark. Creatine is bound at residue Ser-285. ATP contacts are provided by residues Arg-292, Arg-320, Arg-320–Val-325, and Asp-335. Thr-322 is modified (phosphothreonine). Lys-381 is covalently cross-linked (Glycyl lysine isopeptide (Lys-Gly) (interchain with G-Cter in ubiquitin)).

Belongs to the ATP:guanido phosphotransferase family. Dimer of identical or non-identical chains, which can be either B (brain type) or M (muscle type). With MM being the major form in skeletal muscle and myocardium, MB existing in myocardium, and BB existing in many tissues, especially brain. Interacts with SLC12A6 (via C-terminus); the interaction may be required for SLC12A6 potassium-chloride cotransport activity. Ubiquitinated by the ECS(ASB9) complex, leading to its degradation by the proteasome.

Its subcellular location is the cytoplasm. The protein resides in the cytosol. The protein localises to the mitochondrion. It is found in the cell membrane. The catalysed reaction is creatine + ATP = N-phosphocreatine + ADP + H(+). In terms of biological role, reversibly catalyzes the transfer of phosphate between ATP and various phosphogens (e.g. creatine phosphate). Creatine kinase isoenzymes play a central role in energy transduction in tissues with large, fluctuating energy demands, such as skeletal muscle, heart, brain and spermatozoa. Acts as a key regulator of adaptive thermogenesis as part of the futile creatine cycle: localizes to the mitochondria of thermogenic fat cells and acts by mediating phosphorylation of creatine to initiate a futile cycle of creatine phosphorylation and dephosphorylation. During the futile creatine cycle, creatine and N-phosphocreatine are in a futile cycle, which dissipates the high energy charge of N-phosphocreatine as heat without performing any mechanical or chemical work. In Canis lupus familiaris (Dog), this protein is Creatine kinase B-type (CKB).